The chain runs to 502 residues: Facilitated trehalose transporter Tret1 (502 aa).

At 1 to 38 (MGVENTKQTMSSQNIKPAKDSDDVLHTQFKEVKRSPMR) the chain is on the cytoplasmic side. Residues 39–59 (YTMQLLAALAVSMASLMIGYS) form a helical membrane-spanning segment. The Extracellular segment spans residues 60–83 (SSYTSPALVSMRDNTTATFEVTMD). An N-linked (GlcNAc...) asparagine glycan is attached at asparagine 73. The helical transmembrane segment at 84–104 (MAMWIGSIMPLSALIGGIIGG) threads the bilayer. The Cytoplasmic segment spans residues 105 to 120 (PCIEYIGRRNTILSTA). A helical membrane pass occupies residues 121 to 141 (LPFLAGWLFIALATNVAMILV). Topologically, residues 142–144 (GRS) are extracellular. Residues 145–165 (ICGFCVGVASLSLPVYLGESI) traverse the membrane as a helical segment. Residues 166-172 (QPEVRGS) lie on the Cytoplasmic side of the membrane. The helical transmembrane segment at 173 to 193 (LGLLPTVFGNSGILMCFTAGM) threads the bilayer. Over 194–199 (YLAWRN) the chain is Extracellular. The helical transmembrane segment at 200–220 (LALLGACIPIIFLILMFLIPE) threads the bilayer. Topologically, residues 221 to 282 (TPRWYISKGK…ELFRKNHIKP (62 aa)) are cytoplasmic. Residues 283–303 (VFISLGLMFFQQFSGINAVIF) form a helical membrane-spanning segment. Residues 304 to 319 (YTVQIFKDSGSTVDEN) lie on the Extracellular side of the membrane. A glycan (N-linked (GlcNAc...) asparagine) is linked at asparagine 319. The helical transmembrane segment at 320–340 (LSTIIVGLVNFISTFVAAMII) threads the bilayer. Residues 341–346 (DRLGRK) lie on the Cytoplasmic side of the membrane. Residues 347-367 (MLLYISSILMCITLFTFGTFF) form a helical membrane-spanning segment. The Extracellular segment spans residues 368–376 (YVKELMDVT). The helical transmembrane segment at 377-397 (AFGWIPLMSLIVYVIGFSFGF) threads the bilayer. Residues 398-410 (GPIPWLMMGEILP) are Cytoplasmic-facing. A helical transmembrane segment spans residues 411 to 433 (VKIRGTAASVATAFNWSCTFVVT). At 434–446 (KTYEDLVLHIGPY) the chain is on the extracellular side. The chain crosses the membrane as a helical span at residues 447–467 (GTFWLFGTLVAVAFIFVIICV). Residues 468–502 (PETRGRSLEEIERRFAGPVRRTSAIANLKPMPITI) lie on the Cytoplasmic side of the membrane.

This sequence belongs to the major facilitator superfamily. Sugar transporter (TC 2.A.1.1) family. Trehalose transporter subfamily.

It is found in the cell membrane. In terms of biological role, moderate-capacity facilitative transporter for trehalose. Does not transport maltose, sucrose or lactose. Mediates the bidirectional transfer of trehalose. Responsible for the transport of trehalose synthesized in the fat body and the incorporation of trehalose into other tissues that require a carbon source, thereby regulating trehalose levels in the hemolymph. The protein is Facilitated trehalose transporter Tret1 of Apis mellifera ligustica (Common honeybee).